We begin with the raw amino-acid sequence, 214 residues long: Cell division protein SepF (214 aa).

The interval 25–51 (EDDDRGARAGGYSRRPREDRFEEEAYG) is disordered.

This sequence belongs to the SepF family. Homodimer. Interacts with FtsZ.

It localises to the cytoplasm. Its function is as follows. Cell division protein that is part of the divisome complex and is recruited early to the Z-ring. Probably stimulates Z-ring formation, perhaps through the cross-linking of FtsZ protofilaments. Its function overlaps with FtsA. The chain is Cell division protein SepF from Mycolicibacterium smegmatis (strain ATCC 700084 / mc(2)155) (Mycobacterium smegmatis).